Reading from the N-terminus, the 520-residue chain is J protein JJJ2 (520 aa).

The 65-residue stretch at 7–71 (TYYSVLGLPT…SSKQEYDAIL (65 aa)) folds into the J domain. Disordered regions lie at residues 82–257 (LGYK…DLQN) and 389–409 (FESS…RGRP). The span at 91 to 100 (QNQSNNLNQQ) shows a compositional bias: low complexity. Over residues 152–182 (TSKNSKEQQGSQETTNTSENLQRNAKGNKNN) the composition is skewed to polar residues. Basic and acidic residues predominate over residues 397–409 (ENHRSDFNLRGRP).

It localises to the cytoplasm. The protein localises to the nucleus. The protein is J protein JJJ2 (JJJ2) of Vanderwaltozyma polyspora (strain ATCC 22028 / DSM 70294 / BCRC 21397 / CBS 2163 / NBRC 10782 / NRRL Y-8283 / UCD 57-17) (Kluyveromyces polysporus).